The sequence spans 361 residues: tRNA 2-selenouridine synthase (361 aa).

In terms of domain architecture, Rhodanese spans 11–134; the sequence is LLADTPLIDV…LRQTAIQATW (124 aa). The active-site S-selanylcysteine intermediate is the cysteine 94.

It belongs to the SelU family. In terms of assembly, monomer.

The catalysed reaction is 5-methylaminomethyl-2-thiouridine(34) in tRNA + selenophosphate + (2E)-geranyl diphosphate + H2O + H(+) = 5-methylaminomethyl-2-selenouridine(34) in tRNA + (2E)-thiogeraniol + phosphate + diphosphate. The enzyme catalyses 5-methylaminomethyl-2-thiouridine(34) in tRNA + (2E)-geranyl diphosphate = 5-methylaminomethyl-S-(2E)-geranyl-thiouridine(34) in tRNA + diphosphate. It catalyses the reaction 5-methylaminomethyl-S-(2E)-geranyl-thiouridine(34) in tRNA + selenophosphate + H(+) = 5-methylaminomethyl-2-(Se-phospho)selenouridine(34) in tRNA + (2E)-thiogeraniol. It carries out the reaction 5-methylaminomethyl-2-(Se-phospho)selenouridine(34) in tRNA + H2O = 5-methylaminomethyl-2-selenouridine(34) in tRNA + phosphate. Its function is as follows. Involved in the post-transcriptional modification of the uridine at the wobble position (U34) of tRNA(Lys), tRNA(Glu) and tRNA(Gln). Catalyzes the conversion of 2-thiouridine (S2U-RNA) to 2-selenouridine (Se2U-RNA). Acts in a two-step process involving geranylation of 2-thiouridine (S2U) to S-geranyl-2-thiouridine (geS2U) and subsequent selenation of the latter derivative to 2-selenouridine (Se2U) in the tRNA chain. The protein is tRNA 2-selenouridine synthase of Salmonella schwarzengrund (strain CVM19633).